Consider the following 400-residue polypeptide: Tryptophan synthase beta chain (400 aa).

An N6-(pyridoxal phosphate)lysine modification is found at lysine 92.

It belongs to the TrpB family. Tetramer of two alpha and two beta chains. The cofactor is pyridoxal 5'-phosphate.

The catalysed reaction is (1S,2R)-1-C-(indol-3-yl)glycerol 3-phosphate + L-serine = D-glyceraldehyde 3-phosphate + L-tryptophan + H2O. Its pathway is amino-acid biosynthesis; L-tryptophan biosynthesis; L-tryptophan from chorismate: step 5/5. In terms of biological role, the beta subunit is responsible for the synthesis of L-tryptophan from indole and L-serine. The protein is Tryptophan synthase beta chain of Neisseria gonorrhoeae (strain NCCP11945).